The chain runs to 874 residues: Alanine--tRNA ligase (874 aa).

Zn(2+) is bound by residues His-562, His-566, Cys-665, and His-669.

It belongs to the class-II aminoacyl-tRNA synthetase family. The cofactor is Zn(2+).

It localises to the cytoplasm. The enzyme catalyses tRNA(Ala) + L-alanine + ATP = L-alanyl-tRNA(Ala) + AMP + diphosphate. Catalyzes the attachment of alanine to tRNA(Ala) in a two-step reaction: alanine is first activated by ATP to form Ala-AMP and then transferred to the acceptor end of tRNA(Ala). Also edits incorrectly charged Ser-tRNA(Ala) and Gly-tRNA(Ala) via its editing domain. This Pseudomonas entomophila (strain L48) protein is Alanine--tRNA ligase.